Here is a 167-residue protein sequence, read N- to C-terminus: Peptide deformylase (167 aa).

Fe cation is bound by residues cysteine 91 and histidine 133. Residue glutamate 134 is part of the active site. Histidine 137 serves as a coordination point for Fe cation.

This sequence belongs to the polypeptide deformylase family. Fe(2+) serves as cofactor.

The enzyme catalyses N-terminal N-formyl-L-methionyl-[peptide] + H2O = N-terminal L-methionyl-[peptide] + formate. Removes the formyl group from the N-terminal Met of newly synthesized proteins. Requires at least a dipeptide for an efficient rate of reaction. N-terminal L-methionine is a prerequisite for activity but the enzyme has broad specificity at other positions. This chain is Peptide deformylase, found in Buchnera aphidicola subsp. Schizaphis graminum (strain Sg).